An 86-amino-acid polypeptide reads, in one-letter code: Cell division topological specificity factor (86 aa).

Belongs to the MinE family.

Its function is as follows. Prevents the cell division inhibition by proteins MinC and MinD at internal division sites while permitting inhibition at polar sites. This ensures cell division at the proper site by restricting the formation of a division septum at the midpoint of the long axis of the cell. The polypeptide is Cell division topological specificity factor (Rhizobium rhizogenes (strain K84 / ATCC BAA-868) (Agrobacterium radiobacter)).